Here is an 86-residue protein sequence, read N- to C-terminus: Anti-adapter protein IraP (86 aa).

Residues 1–36 (MKNLIAELLFKLAQKEEESKELCAQVEALEIIVTAM) adopt a coiled-coil conformation.

Belongs to the IraP family. Interacts with RssB.

The protein localises to the cytoplasm. Its function is as follows. Inhibits RpoS proteolysis by regulating RssB activity, thereby increasing the stability of the sigma stress factor RpoS especially during phosphate starvation, but also in stationary phase and during nitrogen starvation. Its effect on RpoS stability is due to its interaction with RssB, which probably blocks the interaction of RssB with RpoS, and the consequent delivery of the RssB-RpoS complex to the ClpXP protein degradation pathway. This Shigella sonnei (strain Ss046) protein is Anti-adapter protein IraP.